The following is a 365-amino-acid chain: U-box domain-containing protein 56 (365 aa).

Residues 176–281 adopt a coiled-coil conformation; the sequence is YEEQRRRLEI…ELLRALEKGE (106 aa). The 73-residue stretch at 293–365 folds into the U-box domain; it reads EPPQCFICPI…AIKDWLQQHP (73 aa).

The catalysed reaction is S-ubiquitinyl-[E2 ubiquitin-conjugating enzyme]-L-cysteine + [acceptor protein]-L-lysine = [E2 ubiquitin-conjugating enzyme]-L-cysteine + N(6)-ubiquitinyl-[acceptor protein]-L-lysine.. It participates in protein modification; protein ubiquitination. Its function is as follows. Functions as an E3 ubiquitin ligase. This is U-box domain-containing protein 56 (PUB56) from Arabidopsis thaliana (Mouse-ear cress).